A 239-amino-acid polypeptide reads, in one-letter code: EF-hand domain-containing protein D2 (239 aa).

Positions 1–51 (MATDELASKLSRRLQMEDEGGEATEQPGLNGAAAAAAEAPDETAQALGSAD) are disordered. Ala-2 bears the N-acetylalanine mark. Residue Ser-11 is modified to Phosphoserine. Over residues 32–46 (AAAAAAEAPDETAQA) the composition is skewed to low complexity. Residues Ser-73 and Ser-75 each carry the phosphoserine modification. The residue at position 82 (Tyr-82) is a Phosphotyrosine. EF-hand domains lie at 91–126 (KQIK…LGAP) and 127–162 (QTHL…AAAG). 8 residues coordinate Ca(2+): Asp-104, Asp-108, Glu-115, Asp-140, Asp-142, Asp-144, Lys-146, and Glu-151. At Lys-232 the chain carries N6-acetyllysine.

Interacts with CASP9; with inactive form.

The protein localises to the membrane raft. Its function is as follows. May regulate B-cell receptor (BCR)-induced immature and primary B-cell apoptosis. Plays a role as negative regulator of the canonical NF-kappa-B-activating branch. Controls spontaneous apoptosis through the regulation of BCL2L1 abundance. In Rattus norvegicus (Rat), this protein is EF-hand domain-containing protein D2 (Efhd2).